A 251-amino-acid polypeptide reads, in one-letter code: Adenosylcobinamide-GDP ribazoletransferase (251 aa).

A run of 7 helical transmembrane segments spans residues 36-56 (LYPFIGLIIGALWYLSFFVLS), 60-80 (VPIMLMAALILTVPYILTGFL), 110-130 (VGAFSVISVVLLLLVEFAGMF), 141-161 (ILIFIPIASRVINGYFIVSQE), 181-201 (EIILLGIYVLVALITFFTLGI), 202-222 (NYLIAILAMGLISFILLLKVK), and 231-251 (DVAGYILVLMEFTGILLLGII).

Belongs to the CobS family. The cofactor is Mg(2+).

It is found in the cell membrane. The enzyme catalyses alpha-ribazole + adenosylcob(III)inamide-GDP = adenosylcob(III)alamin + GMP + H(+). The catalysed reaction is alpha-ribazole 5'-phosphate + adenosylcob(III)inamide-GDP = adenosylcob(III)alamin 5'-phosphate + GMP + H(+). It functions in the pathway cofactor biosynthesis; adenosylcobalamin biosynthesis; adenosylcobalamin from cob(II)yrinate a,c-diamide: step 7/7. Joins adenosylcobinamide-GDP and alpha-ribazole to generate adenosylcobalamin (Ado-cobalamin). Also synthesizes adenosylcobalamin 5'-phosphate from adenosylcobinamide-GDP and alpha-ribazole 5'-phosphate. This chain is Adenosylcobinamide-GDP ribazoletransferase, found in Clostridium perfringens (strain ATCC 13124 / DSM 756 / JCM 1290 / NCIMB 6125 / NCTC 8237 / Type A).